The following is a 480-amino-acid chain: Glycogen synthase (480 aa).

Position 15 (Lys-15) interacts with ADP-alpha-D-glucose.

This sequence belongs to the glycosyltransferase 1 family. Bacterial/plant glycogen synthase subfamily.

The enzyme catalyses [(1-&gt;4)-alpha-D-glucosyl](n) + ADP-alpha-D-glucose = [(1-&gt;4)-alpha-D-glucosyl](n+1) + ADP + H(+). Its pathway is glycan biosynthesis; glycogen biosynthesis. Its function is as follows. Synthesizes alpha-1,4-glucan chains using ADP-glucose. The chain is Glycogen synthase from Granulibacter bethesdensis (strain ATCC BAA-1260 / CGDNIH1).